A 222-amino-acid chain; its full sequence is Ribonuclease S-3 (222 aa).

Residues 1-22 (MFRLQLISAFFILLFSLSPVSA) form the signal peptide. Cysteines 38 and 44 form a disulfide. Residue asparagine 50 is glycosylated (N-linked (GlcNAc...) asparagine). The active-site Proton donor is the histidine 54. RNA is bound by residues histidine 54, 92-93 (QM), 109-110 (HE), and 113-114 (RH). 3 disulfide bridges follow: cysteine 68-cysteine 117, cysteine 177-cysteine 210, and cysteine 193-cysteine 204. Glutamate 110 is an active-site residue. Catalysis depends on histidine 114, which acts as the Proton acceptor.

This sequence belongs to the RNase T2 family.

It is found in the secreted. Its subcellular location is the extracellular space. The catalysed reaction is a ribonucleotidyl-ribonucleotide-RNA + H2O = a 3'-end 3'-phospho-ribonucleotide-RNA + a 5'-end dephospho-ribonucleoside-RNA + H(+). In terms of biological role, self-incompatibility (SI) is the inherited ability of a flowering plant to prevent self-fertilization by discriminating between self and non-self pollen during pollination. In many species, self-incompatibility is controlled by the single, multiallelic locus S. This chain is Ribonuclease S-3 (S3), found in Petunia hybrida (Petunia).